Reading from the N-terminus, the 355-residue chain is Peptide chain release factor 1 (355 aa).

Position 231 is an N5-methylglutamine (Gln231).

This sequence belongs to the prokaryotic/mitochondrial release factor family. In terms of processing, methylated by PrmC. Methylation increases the termination efficiency of RF1.

The protein resides in the cytoplasm. Peptide chain release factor 1 directs the termination of translation in response to the peptide chain termination codons UAG and UAA. In Erythrobacter litoralis (strain HTCC2594), this protein is Peptide chain release factor 1.